Here is a 323-residue protein sequence, read N- to C-terminus: Aldo-keto reductase family 1 member C21 (323 aa).

Glycine 20–alanine 24 lines the NADP(+) pocket. Lysine 31 is a binding site for substrate. Residue aspartate 50 participates in NADP(+) binding. Catalysis depends on tyrosine 55, which acts as the Proton donor. Substrate is bound at residue histidine 117. NADP(+) contacts are provided by residues serine 166 to asparagine 167, glutamine 190, tyrosine 216 to tyrosine 224, and threonine 270 to asparagine 280.

The protein belongs to the aldo/keto reductase family. In terms of assembly, monomer. As to expression, detected in kidney and brain.

The protein resides in the cytoplasm. It catalyses the reaction androsterone + NADP(+) = 5alpha-androstan-3,17-dione + NADPH + H(+). It carries out the reaction androsterone + NAD(+) = 5alpha-androstan-3,17-dione + NADH + H(+). Inhibited by high concentrations of substrate. Its function is as follows. NADP-dependent 17-alpha-hydroxysteroid dehydrogenase that converts 5-alpha-androstane-3,17-dione into androsterone. Has lower 3-alpha-hydroxysteroid dehydrogenase activity. Has broad substrate specificity and acts on various 17-alpha-hydroxysteroids, 17-ketosteroids, 3-alpha hydroxysteroids and 3-ketosteroids. Reduction of keto groups is strictly stereoselective. Reduction of 17-ketosteroids yields only 17-alpha-hydroxysteroids. Likewise, reduction of 3-ketosteroids yields only 3-alpha-hydroxysteroids. This chain is Aldo-keto reductase family 1 member C21 (Akr1c21), found in Mus musculus (Mouse).